The following is a 422-amino-acid chain: Serine hydroxymethyltransferase (422 aa).

(6S)-5,6,7,8-tetrahydrofolate is bound by residues L121 and 125-127 (GHL). At K230 the chain carries N6-(pyridoxal phosphate)lysine. (6S)-5,6,7,8-tetrahydrofolate is bound at residue 355-357 (SPF).

The protein belongs to the SHMT family. In terms of assembly, homodimer. The cofactor is pyridoxal 5'-phosphate.

Its subcellular location is the cytoplasm. The catalysed reaction is (6R)-5,10-methylene-5,6,7,8-tetrahydrofolate + glycine + H2O = (6S)-5,6,7,8-tetrahydrofolate + L-serine. The protein operates within one-carbon metabolism; tetrahydrofolate interconversion. It functions in the pathway amino-acid biosynthesis; glycine biosynthesis; glycine from L-serine: step 1/1. Functionally, catalyzes the reversible interconversion of serine and glycine with tetrahydrofolate (THF) serving as the one-carbon carrier. This reaction serves as the major source of one-carbon groups required for the biosynthesis of purines, thymidylate, methionine, and other important biomolecules. Also exhibits THF-independent aldolase activity toward beta-hydroxyamino acids, producing glycine and aldehydes, via a retro-aldol mechanism. The polypeptide is Serine hydroxymethyltransferase (Teredinibacter turnerae (strain ATCC 39867 / T7901)).